The following is a 476-amino-acid chain: Sulfate adenylyltransferase subunit 1 (476 aa).

Residues 24–239 (KSLLRFLTCG…LLETVDVDHE (216 aa)) enclose the tr-type G domain. Residues 33 to 40 (GSVDDGKS) form a G1 region. A GTP-binding site is contributed by 33–40 (GSVDDGKS). The segment at 91 to 95 (GITID) is G2. The G3 stretch occupies residues 112 to 115 (DTPG). GTP contacts are provided by residues 112–116 (DTPGH) and 167–170 (NKMD). The interval 167 to 170 (NKMD) is G4. The interval 205–207 (SAL) is G5.

This sequence belongs to the TRAFAC class translation factor GTPase superfamily. Classic translation factor GTPase family. CysN/NodQ subfamily. Heterodimer composed of CysD, the smaller subunit, and CysN.

It carries out the reaction sulfate + ATP + H(+) = adenosine 5'-phosphosulfate + diphosphate. It functions in the pathway sulfur metabolism; hydrogen sulfide biosynthesis; sulfite from sulfate: step 1/3. Functionally, with CysD forms the ATP sulfurylase (ATPS) that catalyzes the adenylation of sulfate producing adenosine 5'-phosphosulfate (APS) and diphosphate, the first enzymatic step in sulfur assimilation pathway. APS synthesis involves the formation of a high-energy phosphoric-sulfuric acid anhydride bond driven by GTP hydrolysis by CysN coupled to ATP hydrolysis by CysD. This Vibrio campbellii (strain ATCC BAA-1116) protein is Sulfate adenylyltransferase subunit 1.